A 515-amino-acid polypeptide reads, in one-letter code: tRNA-2-methylthio-N(6)-dimethylallyladenosine synthase (515 aa).

The region spanning lysine 25–histidine 140 is the MTTase N-terminal domain. [4Fe-4S] cluster is bound by residues cysteine 34, cysteine 69, cysteine 103, cysteine 177, cysteine 181, and cysteine 184. The Radical SAM core domain occupies arginine 163–glutamate 393. Positions alanine 396 to glycine 466 constitute a TRAM domain. Residues aspartate 482–alanine 515 are disordered. Low complexity predominate over residues glycine 490–glycine 506.

Belongs to the methylthiotransferase family. MiaB subfamily. As to quaternary structure, monomer. Requires [4Fe-4S] cluster as cofactor.

Its subcellular location is the cytoplasm. It carries out the reaction N(6)-dimethylallyladenosine(37) in tRNA + (sulfur carrier)-SH + AH2 + 2 S-adenosyl-L-methionine = 2-methylsulfanyl-N(6)-dimethylallyladenosine(37) in tRNA + (sulfur carrier)-H + 5'-deoxyadenosine + L-methionine + A + S-adenosyl-L-homocysteine + 2 H(+). Its function is as follows. Catalyzes the methylthiolation of N6-(dimethylallyl)adenosine (i(6)A), leading to the formation of 2-methylthio-N6-(dimethylallyl)adenosine (ms(2)i(6)A) at position 37 in tRNAs that read codons beginning with uridine. The sequence is that of tRNA-2-methylthio-N(6)-dimethylallyladenosine synthase from Paenarthrobacter aurescens (strain TC1).